The primary structure comprises 377 residues: N5-carboxyaminoimidazole ribonucleotide synthase (377 aa).

ATP-binding positions include Arg-93, Lys-133, Gly-138 to Gln-144, Glu-175 to Val-178, Glu-183, His-206, and Asn-257 to Glu-258. Positions Lys-97–Cys-287 constitute an ATP-grasp domain.

Belongs to the PurK/PurT family. In terms of assembly, homodimer.

The catalysed reaction is 5-amino-1-(5-phospho-beta-D-ribosyl)imidazole + hydrogencarbonate + ATP = 5-carboxyamino-1-(5-phospho-D-ribosyl)imidazole + ADP + phosphate + 2 H(+). It participates in purine metabolism; IMP biosynthesis via de novo pathway; 5-amino-1-(5-phospho-D-ribosyl)imidazole-4-carboxylate from 5-amino-1-(5-phospho-D-ribosyl)imidazole (N5-CAIR route): step 1/2. Catalyzes the ATP-dependent conversion of 5-aminoimidazole ribonucleotide (AIR) and HCO(3)(-) to N5-carboxyaminoimidazole ribonucleotide (N5-CAIR). This is N5-carboxyaminoimidazole ribonucleotide synthase from Vibrio cholerae serotype O1 (strain ATCC 39315 / El Tor Inaba N16961).